The chain runs to 141 residues: Perlwapin-like protein (141 aa).

The first 19 residues, 1-19 (MNVYFILFLGVFAFIEVNC), serve as a signal peptide directing secretion. Residues 23-71 (KSKSLGTCPKLDVSTVCVVDYKFNCLFQKQCPSGYRCCTYGCNRRCAAV) form the WAP domain. 6 cysteine pairs are disulfide-bonded: Cys-30–Cys-60, Cys-39–Cys-64, Cys-47–Cys-59, Cys-53–Cys-68, Cys-81–Cys-105, and Cys-92–Cys-104.

In terms of tissue distribution, component of the organic matrix of calcified shell layers like nacre and prisms.

It localises to the secreted. In Mytilus galloprovincialis (Mediterranean mussel), this protein is Perlwapin-like protein.